The primary structure comprises 383 residues: Acetylornithine deacetylase (383 aa).

Position 80 (His80) interacts with Zn(2+). Asp82 is an active-site residue. Asp112 contacts Zn(2+). Glu144 is a catalytic residue. Positions 145, 169, and 355 each coordinate Zn(2+).

The protein belongs to the peptidase M20A family. ArgE subfamily. In terms of assembly, homodimer. Requires Zn(2+) as cofactor. The cofactor is Co(2+). Glutathione serves as cofactor.

It is found in the cytoplasm. It carries out the reaction N(2)-acetyl-L-ornithine + H2O = L-ornithine + acetate. It participates in amino-acid biosynthesis; L-arginine biosynthesis; L-ornithine from N(2)-acetyl-L-ornithine (linear): step 1/1. In terms of biological role, catalyzes the hydrolysis of the amide bond of N(2)-acetylated L-amino acids. Cleaves the acetyl group from N-acetyl-L-ornithine to form L-ornithine, an intermediate in L-arginine biosynthesis pathway, and a branchpoint in the synthesis of polyamines. This is Acetylornithine deacetylase from Escherichia coli O139:H28 (strain E24377A / ETEC).